Here is a 320-residue protein sequence, read N- to C-terminus: Acyl-coenzyme A thioesterase 8 (320 aa).

Residues Asp-233, Ser-255, and Gln-305 each act as charge relay system in the active site. The Microbody targeting signal signature appears at 318-320 (SKL).

Belongs to the C/M/P thioester hydrolase family. In terms of assembly, homodimer. In terms of tissue distribution, ubiquitous.

It localises to the peroxisome matrix. It carries out the reaction choloyl-CoA + H2O = cholate + CoA + H(+). The enzyme catalyses chenodeoxycholoyl-CoA + H2O = chenodeoxycholate + CoA + H(+). It catalyses the reaction acetyl-CoA + H2O = acetate + CoA + H(+). The catalysed reaction is malonyl-CoA + H2O = malonate + CoA + H(+). It carries out the reaction acetoacetyl-CoA + H2O = acetoacetate + CoA + H(+). The enzyme catalyses propanoyl-CoA + H2O = propanoate + CoA + H(+). It catalyses the reaction butanoyl-CoA + H2O = butanoate + CoA + H(+). The catalysed reaction is succinyl-CoA + H2O = succinate + CoA + H(+). It carries out the reaction glutaryl-CoA + H2O = glutarate + CoA + H(+). The enzyme catalyses hexanoyl-CoA + H2O = hexanoate + CoA + H(+). It catalyses the reaction hexanedioyl-CoA + H2O = hexanedioate + CoA + H(+). The catalysed reaction is octanoyl-CoA + H2O = octanoate + CoA + H(+). It carries out the reaction octanedioyl-CoA + H2O = octanedioate + CoA + H(+). The enzyme catalyses decanoyl-CoA + H2O = decanoate + CoA + H(+). It catalyses the reaction decanedioyl-CoA + H2O = decanedioate + CoA + H(+). The catalysed reaction is dodecanoyl-CoA + H2O = dodecanoate + CoA + H(+). It carries out the reaction dodecanedioyl-CoA + H2O = dodecanedioate + CoA + H(+). The enzyme catalyses tetradecanoyl-CoA + H2O = tetradecanoate + CoA + H(+). It catalyses the reaction (9Z)-tetradecenoyl-CoA + H2O = (9Z)-tetradecenoate + CoA + H(+). The catalysed reaction is hexadecanoyl-CoA + H2O = hexadecanoate + CoA + H(+). It carries out the reaction (9Z)-hexadecenoyl-CoA + H2O = (9Z)-hexadecenoate + CoA + H(+). The enzyme catalyses octadecanoyl-CoA + H2O = octadecanoate + CoA + H(+). It catalyses the reaction (9Z)-octadecenoyl-CoA + H2O = (9Z)-octadecenoate + CoA + H(+). The catalysed reaction is (9Z,12Z)-octadecadienoyl-CoA + H2O = (9Z,12Z)-octadecadienoate + CoA + H(+). It carries out the reaction eicosanoyl-CoA + H2O = eicosanoate + CoA + H(+). The enzyme catalyses (5Z,8Z,11Z,14Z)-eicosatetraenoyl-CoA + H2O = (5Z,8Z,11Z,14Z)-eicosatetraenoate + CoA + H(+). It catalyses the reaction 4,8-dimethylnonanoyl-CoA + H2O = 4,8-dimethylnonanoate + CoA + H(+). The catalysed reaction is 2,6-dimethylheptanoyl-CoA + H2O = 2,6-dimethylheptanoate + CoA + H(+). It carries out the reaction (3S)-3-hydroxy-3-methylglutaryl-CoA + H2O = 3-hydroxy-3-methylglutarate + CoA + H(+). The enzyme catalyses 3alpha,7alpha,12alpha-trihydroxy-5beta-cholestan-26-oyl-CoA + H2O = 3alpha,7alpha,12alpha-trihydroxy-5beta-cholestan-26-oate + CoA + H(+). It catalyses the reaction 2-methyloctadecanoyl-CoA + H2O = 2-methyloctadecanoate + CoA + H(+). The catalysed reaction is prostaglandin F2alpha-CoA + H2O = prostaglandin F2alpha + CoA + H(+). Its pathway is lipid metabolism; fatty acid metabolism. With respect to regulation, inhibited by CoASH (IC(50)=10-15 uM). Also inhibited by cysteine-reactive agents. Functionally, catalyzes the hydrolysis of acyl-CoAs into free fatty acids and coenzyme A (CoASH), regulating their respective intracellular levels. Displays no strong substrate specificity with respect to the carboxylic acid moiety of Acyl-CoAs. Hydrolyzes medium length (C2 to C20) straight-chain, saturated and unsaturated acyl-CoAS but is inactive towards substrates with longer aliphatic chains. Moreover, it catalyzes the hydrolysis of CoA esters of bile acids, such as choloyl-CoA and chenodeoxycholoyl-CoA and competes with bile acid CoA:amino acid N-acyltransferase (BAAT). Is also able to hydrolyze CoA esters of dicarboxylic acids. It is involved in the metabolic regulation of peroxisome proliferation. The sequence is that of Acyl-coenzyme A thioesterase 8 (Acot8) from Mus musculus (Mouse).